The following is a 119-amino-acid chain: Ribonuclease P protein component (119 aa).

The protein belongs to the RnpA family. Consists of a catalytic RNA component (M1 or rnpB) and a protein subunit.

It carries out the reaction Endonucleolytic cleavage of RNA, removing 5'-extranucleotides from tRNA precursor.. In terms of biological role, RNaseP catalyzes the removal of the 5'-leader sequence from pre-tRNA to produce the mature 5'-terminus. It can also cleave other RNA substrates such as 4.5S RNA. The protein component plays an auxiliary but essential role in vivo by binding to the 5'-leader sequence and broadening the substrate specificity of the ribozyme. This Dictyoglomus turgidum (strain DSM 6724 / Z-1310) protein is Ribonuclease P protein component.